The sequence spans 255 residues: Tabinhibitin 1 (255 aa).

Residues 1 to 23 (MTSILVSRFLIAALVLQYATSDA) form the signal peptide. In terms of domain architecture, SCP spans 67 to 211 (LSKINDVRDH…KARALLTCNF (145 aa)).

This sequence belongs to the CRISP family. Expressed in salivary glands.

Its subcellular location is the secreted. Functionally, inhibits platelet aggregation induced by all agonists tested. May act by competing with fibrinogen for binding to glycoprotein IIb/IIIa (ITGA2B/ITGB3). The sequence is that of Tabinhibitin 1 from Tabanus yao (Horsefly).